Consider the following 117-residue polypeptide: Large ribosomal subunit protein uL22 (117 aa).

It belongs to the universal ribosomal protein uL22 family. In terms of assembly, part of the 50S ribosomal subunit.

This protein binds specifically to 23S rRNA; its binding is stimulated by other ribosomal proteins, e.g. L4, L17, and L20. It is important during the early stages of 50S assembly. It makes multiple contacts with different domains of the 23S rRNA in the assembled 50S subunit and ribosome. In terms of biological role, the globular domain of the protein is located near the polypeptide exit tunnel on the outside of the subunit, while an extended beta-hairpin is found that lines the wall of the exit tunnel in the center of the 70S ribosome. The polypeptide is Large ribosomal subunit protein uL22 (Staphylococcus aureus (strain USA300)).